Consider the following 245-residue polypeptide: tRNA pseudouridine synthase A (245 aa).

Asp-52 (nucleophile) is an active-site residue. Tyr-111 contacts substrate.

It belongs to the tRNA pseudouridine synthase TruA family. Homodimer.

It catalyses the reaction uridine(38/39/40) in tRNA = pseudouridine(38/39/40) in tRNA. Formation of pseudouridine at positions 38, 39 and 40 in the anticodon stem and loop of transfer RNAs. This is tRNA pseudouridine synthase A from Rickettsia typhi (strain ATCC VR-144 / Wilmington).